The chain runs to 1135 residues: MALFPRGILIALVLSFVLNLGLVTKIHAKDTLDSIIDILSGLTCETQGVGDLMRTEFSHTCIVAPFFTFAVMNLVSPVLYMNTFLKLKINDSDLFNDSNFGNFPGGQCTRENRIDPKNPELHFALCSNAKLIVSRAKSVTESALAIAKAVLTWSDPWDDIKQAWENKKKEYHIPYRGKPGDDGFAFDVGFPVIYWKVIQDRDRICVSTKGFTGDVPVGCKYMKEPFPKSIYNSFIDVEDKNFIKDSTNDTPSDPLALVSCSAAGDGCYQKAYNASKTAIVMTSPLIECIRQMIARLLISKDVCSFDNVDQVVNLASRQDSALFQFQVGMHKIVTAFLTLYVMFFGFKLLLAGKVPPKSEYINFILKIIFVTYFSIGININPSNGSQYDRLDGMIQWVFPFLLNGISGLANWVMNAAPSGLCKFNNISYDKSVSYIALWDALDCRVAHYLGLDILSTLLVENSYRSHDFLNFDFFSFSAPPYIYLIIPAIISGNMMLVSLALSYPLLVISVAAFMVNATIMCMISIVILGILAPLFVPMFLFAYTRNYFDSWVKLMISFLLQPMVVVTFMITMFAVYDYGFYGKCQYKSKLIHNSIEDKMQGGIKSKRDVLIFYINNDWDDTSQYPDKDSVESCKNSLGYMLNNPINTAFNFAKDNISEIVNSKPGETTTDEFLSKFQFLSGVVLGPGMFFMSPKVLFEKIKNIFLALITACFTLYLMYNFSSQLAEFAADMTEGVALNNVAIKPQAIFKAAMAALANAGTATKGIDQIASRGGGGGARDLIGAKGLVSDNIASSGGAVGDNIASSGGAVGDNIAVSGAASTPTVTTTTASSSIANSMTKTIGDDVRSDIVTPHASTTAVPQHSSINTTIPTSVSPNIKSTSLKEIIRDNQENEKEIDNTTRAQEKIKSSSKVSGLIDYSFNLKEHDNPTGIKQIRENAEIRDKRVEVEKAWNELVASGGGRIRDQQSEETSEQRTNAEKKWNEFVDSGVVTEIREIDNSVNNKLADKLDKSEKSKIEENKNIENNIKVYNTNTLPQEKVNNTDKSSGLIDYSFNLKEHDNPTGVKQIRENAEIRDKRVKVEKAWNELVASGGGRVKEQAGGKITERRANAEKVWDDLVKSGVVKEKKDNSSNENS.

Positions 1–28 (MALFPRGILIALVLSFVLNLGLVTKIHA) are cleaved as a signal peptide. 7 helical membrane-spanning segments follow: residues 332–352 (IVTA…LLAG), 359–379 (EYIN…GINI), 393–413 (MIQW…NWVM), 495–515 (MLVS…AFMV), 522–542 (MISI…FLFA), 555–575 (MISF…MFAV), and 700–720 (IKNI…MYNF).

Belongs to the TrbL/VirB6 family.

Its subcellular location is the cell membrane. This is an uncharacterized protein from Rickettsia typhi (strain ATCC VR-144 / Wilmington).